The chain runs to 860 residues: Leucine--tRNA ligase (860 aa).

The short motif at V73 to G83 is the 'HIGH' region element. The 'KMSKS' region motif lies at S650 to M654. Residue D653 participates in ATP binding.

It belongs to the class-I aminoacyl-tRNA synthetase family.

Its subcellular location is the cytoplasm. The enzyme catalyses tRNA(Leu) + L-leucine + ATP = L-leucyl-tRNA(Leu) + AMP + diphosphate. The chain is Leucine--tRNA ligase from Shigella flexneri.